The following is a 248-amino-acid chain: MYKLVLIRHGESTWNLENRFTGWVDVDLTETGAAQARQAGKLLKEAGMGFDVAYTSVLKRAIRTLWHVQDEMDLMWIPVRNEWRLNERHYGALAGLNKSETAAKFGDEQVLVWRRSYDTPPPALEPTDPRASYDDPRYANVPRNEIPLTECLKDTVARVMPLWNESIAPDIQSGKRVVIAAHGNSIRALVKYLDQISDDDIVGLNIPNGTPLVYELDADLRPLRHYYLGDQEAIAASLAAVASQGKAR.

Substrate-binding positions include 8–15 (RHGESTWN), 21–22 (TG), Arg60, 87–90 (ERHY), Lys98, and 114–115 (RR). His9 acts as the Tele-phosphohistidine intermediate in catalysis. Glu87 functions as the Proton donor/acceptor in the catalytic mechanism. Residues 117 to 137 (YDTPPPALEPTDPRASYDDPR) form a disordered region. The segment covering 127–137 (TDPRASYDDPR) has biased composition (basic and acidic residues). Substrate is bound at residue 183–184 (GN).

The protein belongs to the phosphoglycerate mutase family. BPG-dependent PGAM subfamily. As to quaternary structure, homodimer.

It catalyses the reaction (2R)-2-phosphoglycerate = (2R)-3-phosphoglycerate. It functions in the pathway carbohydrate degradation; glycolysis; pyruvate from D-glyceraldehyde 3-phosphate: step 3/5. Its function is as follows. Catalyzes the interconversion of 2-phosphoglycerate and 3-phosphoglycerate. The chain is 2,3-bisphosphoglycerate-dependent phosphoglycerate mutase from Cupriavidus taiwanensis (strain DSM 17343 / BCRC 17206 / CCUG 44338 / CIP 107171 / LMG 19424 / R1) (Ralstonia taiwanensis (strain LMG 19424)).